The primary structure comprises 756 residues: Protein O-mannosyl-transferase 2 (756 aa).

7 helical membrane passes run A64–Y84, T110–L130, A156–L176, S179–L199, I203–F223, C245–I265, and V293–I313. MIR domains follow at residues P344–L400, P410–C466, and G471–H528. 4 helical membrane-spanning segments follow: residues P602–A622, L643–I663, H672–L692, and S713–M733.

The protein belongs to the glycosyltransferase 39 family. In terms of tissue distribution, widely expressed. Has particularly strong expression in ovary, testis, liver, brain, muscle, heart and eye.

Its subcellular location is the endoplasmic reticulum membrane. It catalyses the reaction a di-trans,poly-cis-dolichyl beta-D-mannosyl phosphate + L-seryl-[protein] = 3-O-(alpha-D-mannosyl)-L-seryl-[protein] + a di-trans,poly-cis-dolichyl phosphate + H(+). The enzyme catalyses a di-trans,poly-cis-dolichyl beta-D-mannosyl phosphate + L-threonyl-[protein] = 3-O-(alpha-D-mannosyl)-L-threonyl-[protein] + a di-trans,poly-cis-dolichyl phosphate + H(+). It participates in protein modification; protein glycosylation. Functionally, transfers mannosyl residues to the hydroxyl group of serine or threonine residues. Coexpression of both POMT1 and POMT2 is necessary for enzyme activity, expression of either POMT1 or POMT2 alone is insufficient. The chain is Protein O-mannosyl-transferase 2 from Danio rerio (Zebrafish).